Reading from the N-terminus, the 423-residue chain is Nucleoporin NUP42 (423 aa).

A C3H1-type zinc finger spans residues 1 to 25 (MAICQFFLQGRCRFGDRCWNEHPGA). An FG 1 repeat occupies 14-15 (FG). A disordered region spans residues 24–85 (GARGAGGGRQ…EKPYFSSFDS (62 aa)). Over residues 40–69 (SGNNRRGWNTTSQRYSNVIQPSSFSKSTPW) the composition is skewed to polar residues. Positions 94 to 170 (GFGLSENPFA…EYHNFLTSNN (77 aa)) are interaction with HIV-1 Vpr. The stretch at 95 to 96 (FG) is one FG 2 repeat. Ser106 is modified (phosphoserine). FG repeat units follow at residues 218–219 (FG), 220–221 (FG), 265–266 (FG), 271–272 (FG), 288–289 (FG), 290–291 (FG), 311–312 (FG), 336–337 (FG), 345–346 (FG), and 364–365 (FG). The interaction with GLE1 stretch occupies residues 365 to 423 (GNSSISTSLSASSSIIATDNVLFTPRDKLTVEELEQFQSKKFTLGKIPLKPPPLELLNV).

As to quaternary structure, probable component of the nuclear pore complex (NPC). Interacts with nuclear export protein NXF1. Interacts with GLE1. Able to form a heterotrimer with NUP155 and GLE1 in vitro. Interacts with XPO1. In terms of assembly, (Microbial infection) Interacts with the HIV-1 virus proteins Rev and Vpr. The interaction with HIV-1 Rev, a protein that mediates nuclear export of unspliced viral RNAs, suggests that its function may be bypassed by the HIV-1 virus. Post-translationally, O-glycosylated. As to expression, ubiquitously expressed.

The protein resides in the nucleus. The protein localises to the nuclear pore complex. It localises to the nucleus membrane. Functionally, required for the export of mRNAs containing poly(A) tails from the nucleus into the cytoplasm. Its function is as follows. (Microbial infection) In case of infection by HIV-1, it may participate in the docking of viral Vpr at the nuclear envelope. The polypeptide is Nucleoporin NUP42 (Homo sapiens (Human)).